The following is a 103-amino-acid chain: Large ribosomal subunit protein bL32m (103 aa).

Residues 1 to 47 constitute a mitochondrion transit peptide; that stretch reads MALLRGNSLAISQKMLSVFQASALPHISLRIFISPPSIANIWNSILL. Zn(2+) is bound by residues Cys77, Cys80, Cys90, and Cys93.

This sequence belongs to the bacterial ribosomal protein bL32 family. As to quaternary structure, component of the mitochondrial large ribosomal subunit (mt-LSU). Mature yeast 74S mitochondrial ribosomes consist of a small (37S) and a large (54S) subunit. The 37S small subunit contains a 15S ribosomal RNA (15S mt-rRNA) and at least 32 different proteins. The 54S large subunit contains a 21S rRNA (21S mt-rRNA) and at least 45 different proteins. bL32m has a zinc binding site. Post-translationally, MRPL32 precursor is processed by the m-AAA protease, which cleaves the N-terminal transit peptide. Cleavage by the m-AAA protease takes place prior to assembly into the large subunit, an essential step for mitochondrial ribosome (mitoribosome) assembly. Proper processing by the m-AAA protease is dependent on the zinc-binding region within the tightly folded C-terminal domain of MRPL32: zinc-dependent folding halts degradation initiated from the N-terminus and triggers the release of mature mrpl32.

Its subcellular location is the mitochondrion. Component of the mitochondrial ribosome (mitoribosome), a dedicated translation machinery responsible for the synthesis of mitochondrial genome-encoded proteins, including at least some of the essential transmembrane subunits of the mitochondrial respiratory chain. The mitoribosomes are attached to the mitochondrial inner membrane and translation products are cotranslationally integrated into the membrane. The protein is Large ribosomal subunit protein bL32m (mrpl32) of Schizosaccharomyces pombe (strain 972 / ATCC 24843) (Fission yeast).